Reading from the N-terminus, the 396-residue chain is Tryptophan synthase beta chain (396 aa).

Lysine 88 carries the N6-(pyridoxal phosphate)lysine modification.

The protein belongs to the TrpB family. Tetramer of two alpha and two beta chains. Requires pyridoxal 5'-phosphate as cofactor.

It carries out the reaction (1S,2R)-1-C-(indol-3-yl)glycerol 3-phosphate + L-serine = D-glyceraldehyde 3-phosphate + L-tryptophan + H2O. It participates in amino-acid biosynthesis; L-tryptophan biosynthesis; L-tryptophan from chorismate: step 5/5. In terms of biological role, the beta subunit is responsible for the synthesis of L-tryptophan from indole and L-serine. This Shewanella sp. (strain MR-7) protein is Tryptophan synthase beta chain.